The following is a 64-amino-acid chain: Small ribosomal subunit protein bS21 (64 aa).

The disordered stretch occupies residues 39–64 (EKPSVKRKKKALAAKKRAVKKARKSF). Over residues 43-64 (VKRKKKALAAKKRAVKKARKSF) the composition is skewed to basic residues.

This sequence belongs to the bacterial ribosomal protein bS21 family.

This chain is Small ribosomal subunit protein bS21 (rpsU), found in Myxococcus xanthus.